Reading from the N-terminus, the 206-residue chain is Large ribosomal subunit protein uL4 (206 aa).

The protein belongs to the universal ribosomal protein uL4 family. As to quaternary structure, part of the 50S ribosomal subunit.

One of the primary rRNA binding proteins, this protein initially binds near the 5'-end of the 23S rRNA. It is important during the early stages of 50S assembly. It makes multiple contacts with different domains of the 23S rRNA in the assembled 50S subunit and ribosome. In terms of biological role, forms part of the polypeptide exit tunnel. This is Large ribosomal subunit protein uL4 from Cereibacter sphaeroides (strain ATCC 17025 / ATH 2.4.3) (Rhodobacter sphaeroides).